The sequence spans 738 residues: Ribosomal RNA large subunit methyltransferase K/L (738 aa).

The THUMP domain occupies 46-157; it reads TAYRVCLWSR…ADQAVIGLDL (112 aa).

The protein belongs to the methyltransferase superfamily. RlmKL family.

The protein resides in the cytoplasm. It catalyses the reaction guanosine(2445) in 23S rRNA + S-adenosyl-L-methionine = N(2)-methylguanosine(2445) in 23S rRNA + S-adenosyl-L-homocysteine + H(+). The enzyme catalyses guanosine(2069) in 23S rRNA + S-adenosyl-L-methionine = N(2)-methylguanosine(2069) in 23S rRNA + S-adenosyl-L-homocysteine + H(+). Functionally, specifically methylates the guanine in position 2445 (m2G2445) and the guanine in position 2069 (m7G2069) of 23S rRNA. The sequence is that of Ribosomal RNA large subunit methyltransferase K/L from Methylococcus capsulatus (strain ATCC 33009 / NCIMB 11132 / Bath).